The primary structure comprises 1252 residues: Elongator complex protein 1 (1252 aa).

Residues 814 to 1252 (VDVNDLYNVA…MMDWQHEILQ (439 aa)) are mediates dimerization. Residue Ser-1094 is modified to Phosphoserine. The interval 1097–1116 (SSQYSGTSRRTGKTFRSSKN) is disordered. Residues 1106–1116 (RTGKTFRSSKN) show a composition bias toward basic residues. The required for binding to tRNA stretch occupies residues 1111–1129 (FRSSKNRRKHERKLFSLKP).

It belongs to the ELP1/IKA1 family. Homodimer. Component of the elongator complex composed of Elp1, Elp2, Elp3, Elp4, Elp5 and Elp6. The elongator complex associates with and stabilizes microtubules; efficient interaction requires the full complex.

It localises to the cytoplasm. The protein resides in the nucleus. Its subcellular location is the cytoskeleton. The protein localises to the spindle. The protein operates within tRNA modification; 5-methoxycarbonylmethyl-2-thiouridine-tRNA biosynthesis. In terms of biological role, component of the elongator complex, which is required for multiple tRNA modifications, including mcm5U (5-methoxycarbonylmethyl uridine), mcm5s2U (5-methoxycarbonylmethyl-2-thiouridine), and ncm5U (5-carbamoylmethyl uridine). The elongator complex catalyzes formation of carboxymethyluridine in the wobble base at position 34 in tRNAs. ELP1 binds to tRNA, mediating interaction of the elongator complex with tRNA. Binding by the elongator complex stabilizes microtubules and promotes their growth. This induces central spindle asymmetry, promoting polarized signaling endosome trafficking during asymmetric cell division and cell fate assignation of sensory organ precursor cells. Involved in protein synthesis-dependent long-term memory formation, probably as part of the elongator complex. This is Elongator complex protein 1 from Drosophila melanogaster (Fruit fly).